Reading from the N-terminus, the 414-residue chain is 3-oxo-tetronate kinase (414 aa).

ATP is bound by residues serine 255, 355–358 (GGET), and glycine 398.

This sequence belongs to the four-carbon acid sugar kinase family.

It catalyses the reaction 3-dehydro-L-erythronate + ATP = 3-dehydro-4-O-phospho-L-erythronate + ADP + H(+). It carries out the reaction 3-dehydro-D-erythronate + ATP = 3-dehydro-4-O-phospho-D-erythronate + ADP + H(+). Functionally, catalyzes the ATP-dependent phosphorylation of 3-oxo-tetronate to 3-oxo-tetronate 4-phosphate. The protein is 3-oxo-tetronate kinase of Actinobacillus succinogenes (strain ATCC 55618 / DSM 22257 / CCUG 43843 / 130Z).